A 479-amino-acid polypeptide reads, in one-letter code: Ribosomal RNA small subunit methyltransferase F (479 aa).

S-adenosyl-L-methionine-binding positions include 125–131 (AAAPGSK), E149, D176, and D194. Residue C247 is the Nucleophile of the active site.

It belongs to the class I-like SAM-binding methyltransferase superfamily. RsmB/NOP family.

It is found in the cytoplasm. It carries out the reaction cytidine(1407) in 16S rRNA + S-adenosyl-L-methionine = 5-methylcytidine(1407) in 16S rRNA + S-adenosyl-L-homocysteine + H(+). Specifically methylates the cytosine at position 1407 (m5C1407) of 16S rRNA. In Salmonella arizonae (strain ATCC BAA-731 / CDC346-86 / RSK2980), this protein is Ribosomal RNA small subunit methyltransferase F.